A 101-amino-acid chain; its full sequence is MMLEYVLFLSAYLFSIGIYGLITSRNMVRALMCLELILNAVNINLVTFSDLFDSRQLKGDIFSIFVIAIAAAEAAIGPAIVSSIYRNRKSIRINQSNLLNK.

Transmembrane regions (helical) follow at residues 2–22 (MLEY…YGLI), 32–52 (MCLE…SDLF), and 61–81 (IFSI…PAIV).

This sequence belongs to the complex I subunit 4L family. NDH is composed of at least 16 different subunits, 5 of which are encoded in the nucleus.

It is found in the plastid. Its subcellular location is the chloroplast thylakoid membrane. The enzyme catalyses a plastoquinone + NADH + (n+1) H(+)(in) = a plastoquinol + NAD(+) + n H(+)(out). It catalyses the reaction a plastoquinone + NADPH + (n+1) H(+)(in) = a plastoquinol + NADP(+) + n H(+)(out). Its function is as follows. NDH shuttles electrons from NAD(P)H:plastoquinone, via FMN and iron-sulfur (Fe-S) centers, to quinones in the photosynthetic chain and possibly in a chloroplast respiratory chain. The immediate electron acceptor for the enzyme in this species is believed to be plastoquinone. Couples the redox reaction to proton translocation, and thus conserves the redox energy in a proton gradient. The sequence is that of NAD(P)H-quinone oxidoreductase subunit 4L, chloroplastic from Acorus calamus var. americanus (American sweet flag).